Here is a 448-residue protein sequence, read N- to C-terminus: D-inositol 3-phosphate glycosyltransferase (448 aa).

The disordered stretch occupies residues 1–21; that stretch reads MAEQHTGVGRQRGARPWPRPR. Histidine 29 is a 1D-myo-inositol 3-phosphate binding site. Residues 35–36 and glycine 43 contribute to the UDP-N-acetyl-alpha-D-glucosamine site; that span reads QP. Residues 40–45, lysine 98, tyrosine 131, threonine 155, and arginine 175 each bind 1D-myo-inositol 3-phosphate; that span reads DAGGMN. UDP-N-acetyl-alpha-D-glucosamine is bound by residues arginine 255, lysine 260, and glutamine 321. Mg(2+) is bound by residues tyrosine 330, arginine 331, and alanine 333. Glutamate 343 and glutamate 351 together coordinate UDP-N-acetyl-alpha-D-glucosamine. Threonine 357 is a Mg(2+) binding site.

Belongs to the glycosyltransferase group 1 family. MshA subfamily. In terms of assembly, homodimer.

It catalyses the reaction 1D-myo-inositol 3-phosphate + UDP-N-acetyl-alpha-D-glucosamine = 1D-myo-inositol 2-acetamido-2-deoxy-alpha-D-glucopyranoside 3-phosphate + UDP + H(+). Catalyzes the transfer of a N-acetyl-glucosamine moiety to 1D-myo-inositol 3-phosphate to produce 1D-myo-inositol 2-acetamido-2-deoxy-glucopyranoside 3-phosphate in the mycothiol biosynthesis pathway. This chain is D-inositol 3-phosphate glycosyltransferase, found in Salinispora arenicola (strain CNS-205).